Reading from the N-terminus, the 495-residue chain is UDP-glycosyltransferase 73E1 (495 aa).

UDP-alpha-D-glucose is bound by residues Ser299, 355–356, 373–381, and 395–398; these read WA, HCGWNSTIE, and FADQ.

Belongs to the UDP-glycosyltransferase family.

Functionally, may glycosylate diterpenes or flavonols in leaves. The polypeptide is UDP-glycosyltransferase 73E1 (Stevia rebaudiana (Stevia)).